A 59-amino-acid chain; its full sequence is Small ribosomal subunit protein bS21 (59 aa).

Belongs to the bacterial ribosomal protein bS21 family.

The polypeptide is Small ribosomal subunit protein bS21 (Acaryochloris marina (strain MBIC 11017)).